The following is a 198-amino-acid chain: Glycerol-3-phosphate acyltransferase (198 aa).

5 helical membrane passes run 10–30, 57–77, 86–106, 118–138, and 160–180; these read LIPI…WILV, GISF…ILIL, IMYL…WFLF, VVLS…AVVF, and AVTE…IVLI.

Belongs to the PlsY family. In terms of assembly, probably interacts with PlsX.

It localises to the cell inner membrane. The catalysed reaction is an acyl phosphate + sn-glycerol 3-phosphate = a 1-acyl-sn-glycero-3-phosphate + phosphate. It functions in the pathway lipid metabolism; phospholipid metabolism. Its function is as follows. Catalyzes the transfer of an acyl group from acyl-phosphate (acyl-PO(4)) to glycerol-3-phosphate (G3P) to form lysophosphatidic acid (LPA). This enzyme utilizes acyl-phosphate as fatty acyl donor, but not acyl-CoA or acyl-ACP. The polypeptide is Glycerol-3-phosphate acyltransferase (Anaplasma marginale (strain Florida)).